The following is a 464-amino-acid chain: Delta(5) fatty acid desaturase A (464 aa).

The region spanning 13–90 (GKQYSWSELA…LKNYEIGYIS (78 aa)) is the Cytochrome b5 heme-binding domain. Residues His-48 and His-71 each coordinate heme. 2 helical membrane-spanning segments follow: residues 125-145 (AVSI…TYYL) and 153-173 (FYLN…FSMH). The short motif at 176-180 (HDSCH) is the Histidine box-1 element. The Histidine box-2 motif lies at 212–217 (HVIGHH). A helical membrane pass occupies residues 318–338 (FTDLICYFLIAEFVFGWYLTI). Residues 396-400 (QVVHH) carry the Histidine box-3 motif.

This sequence belongs to the fatty acid desaturase type 1 family. Fe cation serves as cofactor.

It localises to the membrane. Functionally, specific for desaturation of the 5 position in C16 and C18 fatty acids. The sequence is that of Delta(5) fatty acid desaturase A (fadA) from Dictyostelium discoideum (Social amoeba).